Reading from the N-terminus, the 1111-residue chain is Lysylphosphatidylglycerol biosynthesis bifunctional protein LysX (1111 aa).

Residues 1–612 (MTLTSPPRTR…VLHHDGTAPD (612 aa)) form a phosphatidylglycerol lysyltransferase region. The next 7 helical transmembrane spans lie at 18 to 38 (VPAA…IASV), 60 to 80 (FPDT…ALAA), 84 to 104 (IAWW…VADL), 118 to 138 (VIGL…RPLF), 152 to 172 (GVLA…LELF), 209 to 229 (VNAL…IVLF), and 308 to 328 (AWLA…ASVG). Positions 613 to 1111 (MSGLRTDTAD…TLPFPLARPR (499 aa)) are lysine--tRNA ligase. The segment at residues 674-747 (VAGRVLRIRD…GTRSLLVRHW (74 aa)) is a DNA-binding region (OB). The Mg(2+) site is built by Asp1023 and Glu1030.

It in the N-terminal section; belongs to the LPG synthetase family. In the C-terminal section; belongs to the class-II aminoacyl-tRNA synthetase family. It depends on Mg(2+) as a cofactor.

It localises to the cell membrane. It carries out the reaction tRNA(Lys) + L-lysine + ATP = L-lysyl-tRNA(Lys) + AMP + diphosphate. The catalysed reaction is L-lysyl-tRNA(Lys) + a 1,2-diacyl-sn-glycero-3-phospho-(1'-sn-glycerol) = a 1,2-diacyl-sn-glycero-3-phospho-1'-(3'-O-L-lysyl)-sn-glycerol + tRNA(Lys). Functionally, catalyzes the production of L-lysyl-tRNA(Lys)transfer and the transfer of a lysyl group from L-lysyl-tRNA(Lys) to membrane-bound phosphatidylglycerol (PG), which produces lysylphosphatidylglycerol (LPG), one of the components of the bacterial membrane with a positive net charge. LPG synthesis contributes to the resistance to cationic antimicrobial peptides (CAMPs) and likely protects M.tuberculosis against the CAMPs produced by competiting microorganisms (bacteriocins). In fact, the modification of anionic phosphatidylglycerol with positively charged L-lysine results in repulsion of the peptides. The sequence is that of Lysylphosphatidylglycerol biosynthesis bifunctional protein LysX (lysX) from Mycobacterium sp. (strain JLS).